The chain runs to 1550 residues: Cellulose synthase 1 (1550 aa).

A catalytic region spans residues 1–741 (MPEVRSSTQS…KERVLKGTVK (741 aa)). The next 3 membrane-spanning stretches (helical) occupy residues 26–46 (GAGL…TSVT), 47–67 (LPPE…FIVG), and 106–126 (GLLG…LFLS). The interval 147–240 (EWPTVDIFVP…YILIFDCDHV (94 aa)) is catalytic subdomain A. Residue Asp-189 is part of the active site. Positions 236 and 238 each coordinate substrate. The catalytic subdomain B stretch occupies residues 317–377 (TAIEQIGGFA…GQRVRWARGM (61 aa)). Asp-333 is an active-site residue. 5 helical membrane-spanning segments follow: residues 398-418 (LCYL…IFLS), 423-443 (FLFF…AYAI), 468-488 (VYET…LLSP), 507-527 (FDLG…GGLA), and 547-567 (LLNS…IAVG). The region spanning 572–647 (QKRNSHRIPA…PARIIRAGNG (76 aa)) is the PilZ domain. Disordered regions lie at residues 711–734 (SSPT…RKER) and 768–813 (APAH…QPLA). The cyclic di-GMP binding domain stretch occupies residues 742–1550 (MVSLLALLTF…KQLEDERRKS (809 aa)). A compositionally biased stretch (low complexity) spans 768–796 (APAHQPEASDLPPLPALLPATSGAAQAGA). The chain crosses the membrane as a helical span at residues 1513–1533 (VLLVGLLGCILIVSVLARALA).

This sequence in the N-terminal section; belongs to the glycosyltransferase 2 family. In the C-terminal section; belongs to the AcsB/BcsB family. Requires Mg(2+) as cofactor.

It is found in the cell inner membrane. The enzyme catalyses [(1-&gt;4)-beta-D-glucosyl](n) + UDP-alpha-D-glucose = [(1-&gt;4)-beta-D-glucosyl](n+1) + UDP + H(+). It participates in glycan metabolism; bacterial cellulose biosynthesis. Its activity is regulated as follows. Activated by c-di-GMP. Bifunctional protein comprised of a catalytic subunit and a regulatory subunit. The catalytic subunit of cellulose synthase polymerizes uridine 5'-diphosphate glucose to cellulose in a processive way. The thick cellulosic mats generated by this enzyme probably provide a specialized protective environment to the bacterium. The regulatory subunit binds bis-(3'-5') cyclic diguanylic acid (c-di-GMP). This Komagataeibacter xylinus (Gluconacetobacter xylinus) protein is Cellulose synthase 1 (acsAB).